A 284-amino-acid polypeptide reads, in one-letter code: D-tagatose-1,6-bisphosphate aldolase subunit GatY (284 aa).

The active-site Proton donor is D82. Zn(2+) is bound by residues H83 and H180. G181 serves as a coordination point for dihydroxyacetone phosphate. H208 is a binding site for Zn(2+). Residues G209–S211 and N230–T233 contribute to the dihydroxyacetone phosphate site.

Belongs to the class II fructose-bisphosphate aldolase family. TagBP aldolase GatY subfamily. Forms a complex with GatZ. Zn(2+) is required as a cofactor.

The enzyme catalyses D-tagatofuranose 1,6-bisphosphate = D-glyceraldehyde 3-phosphate + dihydroxyacetone phosphate. Its pathway is carbohydrate metabolism; D-tagatose 6-phosphate degradation; D-glyceraldehyde 3-phosphate and glycerone phosphate from D-tagatose 6-phosphate: step 2/2. Catalytic subunit of the tagatose-1,6-bisphosphate aldolase GatYZ, which catalyzes the reversible aldol condensation of dihydroxyacetone phosphate (DHAP or glycerone-phosphate) with glyceraldehyde 3-phosphate (G3P) to produce tagatose 1,6-bisphosphate (TBP). Requires GatZ subunit for full activity and stability. Is involved in the catabolism of galactitol. The sequence is that of D-tagatose-1,6-bisphosphate aldolase subunit GatY from Klebsiella pneumoniae subsp. pneumoniae (strain ATCC 700721 / MGH 78578).